We begin with the raw amino-acid sequence, 326 residues long: Polycomb complex protein BMI-1-A (326 aa).

The segment at 18 to 57 adopts an RING-type zinc-finger fold; that stretch reads CVLCGGYFIDATTIIECLHSFCKTCIVRYLETSKYCPICD. Positions 81–95 match the Nuclear localization signal motif; sequence KLVPGLFKGEMKRRR. Disordered regions lie at residues 239-262 and 274-326; these read NPHT…DKAG and CIPS…ISSG. A compositionally biased stretch (low complexity) spans 290-303; sequence ISSTINGTSSSSSS.

As to quaternary structure, component of a PRC1-like complex. Interacts with cbx4.

It is found in the nucleus. Its function is as follows. Component of a Polycomb group (PcG) multiprotein PRC1-like complex, a complex class required to maintain the transcriptionally repressive state of many genes, including Hox genes, throughout development. PcG PRC1 complex acts via chromatin remodeling and modification of histones; it mediates monoubiquitination of histone H2A 'Lys-119', rendering chromatin heritably changed in its expressibility. In the PRC1 complex, it is required to stimulate the E3 ubiquitin-protein ligase activity of rnf2. This Xenopus laevis (African clawed frog) protein is Polycomb complex protein BMI-1-A (bmi1a).